Consider the following 495-residue polypeptide: Glutamate--tRNA ligase (495 aa).

Positions 12–22 (PSPTGHLHIGN) match the 'HIGH' region motif. The 'KMSKS' region signature appears at 259–263 (KLSKR). K262 contributes to the ATP binding site.

It belongs to the class-I aminoacyl-tRNA synthetase family. Glutamate--tRNA ligase type 1 subfamily. As to quaternary structure, monomer.

It localises to the cytoplasm. It catalyses the reaction tRNA(Glu) + L-glutamate + ATP = L-glutamyl-tRNA(Glu) + AMP + diphosphate. Its function is as follows. Catalyzes the attachment of glutamate to tRNA(Glu) in a two-step reaction: glutamate is first activated by ATP to form Glu-AMP and then transferred to the acceptor end of tRNA(Glu). The sequence is that of Glutamate--tRNA ligase from Ligilactobacillus salivarius (strain UCC118) (Lactobacillus salivarius).